The chain runs to 310 residues: Small ribosomal subunit biogenesis GTPase RsgA (310 aa).

Residues 77 to 238 (LSKQSHILAA…IIDTPGIKGF (162 aa)) enclose the CP-type G domain. Residues 126–129 (NKTD) and 180–188 (GNSGVGKST) each bind GTP. 4 residues coordinate Zn(2+): cysteine 262, cysteine 267, histidine 269, and cysteine 275.

It belongs to the TRAFAC class YlqF/YawG GTPase family. RsgA subfamily. Monomer. Associates with 30S ribosomal subunit, binds 16S rRNA. Zn(2+) serves as cofactor.

The protein localises to the cytoplasm. Functionally, one of several proteins that assist in the late maturation steps of the functional core of the 30S ribosomal subunit. Helps release RbfA from mature subunits. May play a role in the assembly of ribosomal proteins into the subunit. Circularly permuted GTPase that catalyzes slow GTP hydrolysis, GTPase activity is stimulated by the 30S ribosomal subunit. The chain is Small ribosomal subunit biogenesis GTPase RsgA from Phocaeicola vulgatus (strain ATCC 8482 / DSM 1447 / JCM 5826 / CCUG 4940 / NBRC 14291 / NCTC 11154) (Bacteroides vulgatus).